The primary structure comprises 422 residues: Serine--tRNA ligase (422 aa).

229–231 (TAE) serves as a coordination point for L-serine. 260–262 (RKE) contributes to the ATP binding site. Glu-283 is a binding site for L-serine. ATP is bound at residue 347-350 (EISS). L-serine is bound at residue Ser-383.

This sequence belongs to the class-II aminoacyl-tRNA synthetase family. Type-1 seryl-tRNA synthetase subfamily. Homodimer. The tRNA molecule binds across the dimer.

The protein localises to the cytoplasm. It carries out the reaction tRNA(Ser) + L-serine + ATP = L-seryl-tRNA(Ser) + AMP + diphosphate + H(+). It catalyses the reaction tRNA(Sec) + L-serine + ATP = L-seryl-tRNA(Sec) + AMP + diphosphate + H(+). Its pathway is aminoacyl-tRNA biosynthesis; selenocysteinyl-tRNA(Sec) biosynthesis; L-seryl-tRNA(Sec) from L-serine and tRNA(Sec): step 1/1. Its function is as follows. Catalyzes the attachment of serine to tRNA(Ser). Is also able to aminoacylate tRNA(Sec) with serine, to form the misacylated tRNA L-seryl-tRNA(Sec), which will be further converted into selenocysteinyl-tRNA(Sec). This Geotalea uraniireducens (strain Rf4) (Geobacter uraniireducens) protein is Serine--tRNA ligase.